A 155-amino-acid chain; its full sequence is Ribosome maturation factor RimP (155 aa).

The protein belongs to the RimP family.

The protein resides in the cytoplasm. Required for maturation of 30S ribosomal subunits. The protein is Ribosome maturation factor RimP of Prochlorococcus marinus (strain MIT 9515).